The primary structure comprises 425 residues: Multifunctional CCA protein (425 aa).

Positions 8 and 11 each coordinate ATP. Residues Gly8 and Arg11 each contribute to the CTP site. Glu21 and Asp23 together coordinate Mg(2+). Arg91, Arg137, and Arg140 together coordinate ATP. CTP-binding residues include Arg91, Arg137, and Arg140. Residues 228 to 329 (TGVHTLMVLD…VDLLDRLGAL (102 aa)) form the HD domain.

It belongs to the tRNA nucleotidyltransferase/poly(A) polymerase family. Bacterial CCA-adding enzyme type 1 subfamily. As to quaternary structure, monomer. Can also form homodimers and oligomers. Mg(2+) is required as a cofactor. The cofactor is Ni(2+).

It catalyses the reaction a tRNA precursor + 2 CTP + ATP = a tRNA with a 3' CCA end + 3 diphosphate. The enzyme catalyses a tRNA with a 3' CCA end + 2 CTP + ATP = a tRNA with a 3' CCACCA end + 3 diphosphate. Its function is as follows. Catalyzes the addition and repair of the essential 3'-terminal CCA sequence in tRNAs without using a nucleic acid template. Adds these three nucleotides in the order of C, C, and A to the tRNA nucleotide-73, using CTP and ATP as substrates and producing inorganic pyrophosphate. tRNA 3'-terminal CCA addition is required both for tRNA processing and repair. Also involved in tRNA surveillance by mediating tandem CCA addition to generate a CCACCA at the 3' terminus of unstable tRNAs. While stable tRNAs receive only 3'-terminal CCA, unstable tRNAs are marked with CCACCA and rapidly degraded. This chain is Multifunctional CCA protein, found in Methylococcus capsulatus (strain ATCC 33009 / NCIMB 11132 / Bath).